The following is a 383-amino-acid chain: Serpin B5 (383 aa).

N106, N133, N176, and N361 each carry an N-linked (GlcNAc...) asparagine glycan.

It belongs to the serpin family. Ov-serpin subfamily.

It localises to the secreted. It is found in the extracellular space. Its function is as follows. May not exhibit serine protease inhibitory activity. In Xenopus laevis (African clawed frog), this protein is Serpin B5 (serpinb5).